The sequence spans 217 residues: Probable transaldolase (217 aa).

The Schiff-base intermediate with substrate role is filled by K83.

The protein belongs to the transaldolase family. Type 3B subfamily.

The protein resides in the cytoplasm. It catalyses the reaction D-sedoheptulose 7-phosphate + D-glyceraldehyde 3-phosphate = D-erythrose 4-phosphate + beta-D-fructose 6-phosphate. It participates in carbohydrate degradation; pentose phosphate pathway; D-glyceraldehyde 3-phosphate and beta-D-fructose 6-phosphate from D-ribose 5-phosphate and D-xylulose 5-phosphate (non-oxidative stage): step 2/3. Its function is as follows. Transaldolase is important for the balance of metabolites in the pentose-phosphate pathway. The protein is Probable transaldolase of Lactiplantibacillus plantarum (strain ATCC BAA-793 / NCIMB 8826 / WCFS1) (Lactobacillus plantarum).